Reading from the N-terminus, the 319-residue chain is Alpha-hemolysin (319 aa).

The first 26 residues, 1–26 (MKTRIVSSVTTTLLLGSILMNPVANA), serve as a signal peptide directing secretion.

This sequence belongs to the aerolysin family. As to quaternary structure, self-assembles to form first a non-lytic oligomeric intermediate and then, a mushroom-shaped homoheptamer structure of 100 Angstroms in length and up to 100 Angstroms in diameter.

Its subcellular location is the secreted. Its function is as follows. Alpha-toxin binds to the membrane of eukaryotic cells resulting in the release of low-molecular weight molecules and leading to an eventual osmotic lysis. Inhibits host neutrophil chemotaxis to the lesion region. Heptamer oligomerization and pore formation is required for lytic activity. In Staphylococcus aureus (strain NCTC 8325 / PS 47), this protein is Alpha-hemolysin (hly).